Here is a 508-residue protein sequence, read N- to C-terminus: MEELQRYLKMDRSRERDFLYPLLFQEYIYALAHDFGLTKLIPYESMQILSYDKKYSSLIVKRLIIRMYQQKHLIILDNDSNQKKFLEHNKNLYSQMLSEGFAVIVEIPFALRLVSSYQGKKMEKSINLGSIHSTFPFLEDKFVHLNHVLNIIIPYPIHLELLVQNLRCWIQDASFLHLLRFFLYEYHNWNSLTTQKTNQNLFFFKENRRFFWFLFNFHVYESESIFLFLRKKSYHLRSTSSIAFLDRTHFYGKIEHFQVVFRNDFHTILWLFKDPFMHYFRYQGKSIMSSKGTPLLMKKWKNYLVNLWEYHFHFWSQPDRLHINQLSNHFLDFLGYLSSVRPNPSVVRNQMLENAFIIDIAINKLDTIVPIIPLIGSLAKANFCNLSGQPVSKPAWTDSPDSDIIDRFGRICRNVSHYYSGSSKKKTLYRIKYILRLSCARTLARNTKSTVRSFLKRLGSEFLEQFLIEEEQVLSFILPKRSSSSQRLSKERVWYFDIIRINDLMDLS.

It belongs to the intron maturase 2 family. MatK subfamily.

It localises to the plastid. The protein resides in the chloroplast. In terms of biological role, usually encoded in the trnK tRNA gene intron. Probably assists in splicing its own and other chloroplast group II introns. The protein is Maturase K of Ranunculus trichophyllus (Whitewater crowfoot).